A 580-amino-acid chain; its full sequence is Proline--tRNA ligase (580 aa).

The protein belongs to the class-II aminoacyl-tRNA synthetase family. ProS type 1 subfamily. In terms of assembly, homodimer.

Its subcellular location is the cytoplasm. It carries out the reaction tRNA(Pro) + L-proline + ATP = L-prolyl-tRNA(Pro) + AMP + diphosphate. Its function is as follows. Catalyzes the attachment of proline to tRNA(Pro) in a two-step reaction: proline is first activated by ATP to form Pro-AMP and then transferred to the acceptor end of tRNA(Pro). As ProRS can inadvertently accommodate and process non-cognate amino acids such as alanine and cysteine, to avoid such errors it has two additional distinct editing activities against alanine. One activity is designated as 'pretransfer' editing and involves the tRNA(Pro)-independent hydrolysis of activated Ala-AMP. The other activity is designated 'posttransfer' editing and involves deacylation of mischarged Ala-tRNA(Pro). The misacylated Cys-tRNA(Pro) is not edited by ProRS. The chain is Proline--tRNA ligase from Polynucleobacter necessarius subsp. necessarius (strain STIR1).